Here is a 177-residue protein sequence, read N- to C-terminus: MDYGYIHLIIGPMFSGKSTELIRIVKRYQIAQYKCCVVKYLKDIRYGNSVYTHDNNHVSAISTTLLYDVVDKIMNFDIIGIDEGQFFKDIVSFSENMANMGKIIIIAALDSTFQRKEFNDILKLIPLSEKVTKLNAVCMECYKDAAFSKRITKEKEIELIGGKEKYKSVCRKCYFLE.

Gly-11–Ser-18 serves as a coordination point for ATP. Glu-83 functions as the Proton acceptor in the catalytic mechanism. Phe-113 contributes to the substrate binding site. Zn(2+) is bound by residues Cys-138 and Cys-141. Substrate is bound at residue Ile-157–Gly-161. Cys-170 and Cys-173 together coordinate Zn(2+).

The protein belongs to the thymidine kinase family.

The catalysed reaction is thymidine + ATP = dTMP + ADP + H(+). This is Thymidine kinase (TK) from Sheeppox virus (strain KS-1) (SPPV).